Reading from the N-terminus, the 213-residue chain is Orotate phosphoribosyltransferase (213 aa).

Lys-26 provides a ligand contact to 5-phospho-alpha-D-ribose 1-diphosphate. An orotate-binding site is contributed by 34–35 (FF). 5-phospho-alpha-D-ribose 1-diphosphate is bound by residues 72 to 73 (YK), Arg-99, Lys-100, Lys-103, His-105, and 124 to 132 (DDVITAGTA). Orotate is bound by residues Thr-128 and Arg-156.

The protein belongs to the purine/pyrimidine phosphoribosyltransferase family. PyrE subfamily. As to quaternary structure, homodimer. Requires Mg(2+) as cofactor.

It carries out the reaction orotidine 5'-phosphate + diphosphate = orotate + 5-phospho-alpha-D-ribose 1-diphosphate. The protein operates within pyrimidine metabolism; UMP biosynthesis via de novo pathway; UMP from orotate: step 1/2. Functionally, catalyzes the transfer of a ribosyl phosphate group from 5-phosphoribose 1-diphosphate to orotate, leading to the formation of orotidine monophosphate (OMP). This is Orotate phosphoribosyltransferase from Yersinia enterocolitica serotype O:8 / biotype 1B (strain NCTC 13174 / 8081).